Reading from the N-terminus, the 210-residue chain is Protein SYM1 (210 aa).

4 helical membrane-spanning segments follow: residues 22-39 (IMTG…QLLF), 68-84 (AVVY…DRWY), 112-129 (LGFA…MSLL), and 173-189 (LLAA…FLSY).

Belongs to the peroxisomal membrane protein PXMP2/4 family.

The protein localises to the mitochondrion inner membrane. In terms of biological role, may be involved in cellular response to stress. Required to maintain mitochondrial DNA (mtDNA) integrity and stability. The polypeptide is Protein SYM1 (SYM1) (Candida glabrata (strain ATCC 2001 / BCRC 20586 / JCM 3761 / NBRC 0622 / NRRL Y-65 / CBS 138) (Yeast)).